Reading from the N-terminus, the 291-residue chain is U3 small nucleolar ribonucleoprotein protein IMP4 (291 aa).

One can recognise a Brix domain in the interval 83–264 (PKVMITTSRD…LYMIRLGTLE (182 aa)).

In terms of assembly, part of the small subunit (SSU) processome, composed of more than 70 proteins and the RNA chaperone small nucleolar RNA (snoRNA) U3. Component of a heterotrimeric complex containing IMP3, IMP4 and MPHOSPH10. Interacts with MPHOSPH10.

It is found in the nucleus. The protein resides in the nucleolus. Functionally, component of the 60-80S U3 small nucleolar ribonucleoprotein (U3 snoRNP). Required for the early cleavages during pre-18S ribosomal RNA processing. Part of the small subunit (SSU) processome, first precursor of the small eukaryotic ribosomal subunit. During the assembly of the SSU processome in the nucleolus, many ribosome biogenesis factors, an RNA chaperone and ribosomal proteins associate with the nascent pre-rRNA and work in concert to generate RNA folding, modifications, rearrangements and cleavage as well as targeted degradation of pre-ribosomal RNA by the RNA exosome. In Homo sapiens (Human), this protein is U3 small nucleolar ribonucleoprotein protein IMP4.